The sequence spans 162 residues: Transcriptional repressor NrdR (162 aa).

Positions 1-21 are disordered; the sequence is MNCPDCGNGRTRVIDTGASSD. A zinc finger lies at 3 to 34; it reads CPDCGNGRTRVIDTGASSDGASVRRRRECQRC. In terms of domain architecture, ATP-cone spans 49–139; it reads LQVKKRDGTI…VYKAFSEPQE (91 aa).

Belongs to the NrdR family. Requires Zn(2+) as cofactor.

Negatively regulates transcription of bacterial ribonucleotide reductase nrd genes and operons by binding to NrdR-boxes. The protein is Transcriptional repressor NrdR of Natronomonas pharaonis (strain ATCC 35678 / DSM 2160 / CIP 103997 / JCM 8858 / NBRC 14720 / NCIMB 2260 / Gabara) (Halobacterium pharaonis).